Consider the following 233-residue polypeptide: Superoxide dismutase [Mn] 3.4, mitochondrial (233 aa).

The N-terminal 29 residues, M1–G29, are a transit peptide targeting the mitochondrion. 4 residues coordinate Mn(2+): H57, H105, D194, and H198.

It belongs to the iron/manganese superoxide dismutase family. As to quaternary structure, homotetramer. The cofactor is Mn(2+).

It is found in the mitochondrion matrix. It carries out the reaction 2 superoxide + 2 H(+) = H2O2 + O2. Its function is as follows. Destroys superoxide anion radicals which are normally produced within the cells and which are toxic to biological systems. In Zea mays (Maize), this protein is Superoxide dismutase [Mn] 3.4, mitochondrial (SODA.3).